Consider the following 315-residue polypeptide: Methionyl-tRNA formyltransferase (315 aa).

The tract at residues 2-189 (SESLRIIFAG…LITTLKQLAD (188 aa)) is N-terminal domain. 113–116 (SLLP) contributes to the (6S)-5,6,7,8-tetrahydrofolate binding site. The tract at residues 210-315 (KEEARIDWSL…EWFVPGNRLV (106 aa)) is C-terminal domain.

This sequence belongs to the Fmt family.

The catalysed reaction is L-methionyl-tRNA(fMet) + (6R)-10-formyltetrahydrofolate = N-formyl-L-methionyl-tRNA(fMet) + (6S)-5,6,7,8-tetrahydrofolate + H(+). Its function is as follows. Attaches a formyl group to the free amino group of methionyl-tRNA(fMet). The formyl group appears to play a dual role in the initiator identity of N-formylmethionyl-tRNA by promoting its recognition by IF2 and preventing the misappropriation of this tRNA by the elongation apparatus. This is Methionyl-tRNA formyltransferase from Escherichia coli O157:H7.